Consider the following 188-residue polypeptide: MRNLSRLSVLALAMLAANPAFAAGGGISLKNTDFVVLLGLLVFIGILVYFKVPGMIGKMLDSRAEGIEAELNEARALREEAQSLLASYERKQREVQEQADRIVEAAKEEATIAAEQARADLEVSLARRMAAAEDQIASAQAAAIKEVRDQSVSIAIAAAQDVIAKQLTAADANALIDGAITEVEAKLH.

Residues 7-27 (LSVLALAMLAANPAFAAGGGI) form a helical membrane-spanning segment.

Belongs to the ATPase B chain family. F-type ATPases have 2 components, F(1) - the catalytic core - and F(0) - the membrane proton channel. F(1) has five subunits: alpha(3), beta(3), gamma(1), delta(1), epsilon(1). F(0) has three main subunits: a(1), b(2) and c(10-14). The alpha and beta chains form an alternating ring which encloses part of the gamma chain. F(1) is attached to F(0) by a central stalk formed by the gamma and epsilon chains, while a peripheral stalk is formed by the delta and b chains.

It is found in the cell inner membrane. Functionally, f(1)F(0) ATP synthase produces ATP from ADP in the presence of a proton or sodium gradient. F-type ATPases consist of two structural domains, F(1) containing the extramembraneous catalytic core and F(0) containing the membrane proton channel, linked together by a central stalk and a peripheral stalk. During catalysis, ATP synthesis in the catalytic domain of F(1) is coupled via a rotary mechanism of the central stalk subunits to proton translocation. Component of the F(0) channel, it forms part of the peripheral stalk, linking F(1) to F(0). The sequence is that of ATP synthase subunit b 1 from Roseobacter denitrificans (strain ATCC 33942 / OCh 114) (Erythrobacter sp. (strain OCh 114)).